The sequence spans 144 residues: UPF0102 protein BTH_I3148 (144 aa).

Residues 1–20 (MCHARAARQATGEAEAAPRD) are disordered.

The protein belongs to the UPF0102 family.

The sequence is that of UPF0102 protein BTH_I3148 from Burkholderia thailandensis (strain ATCC 700388 / DSM 13276 / CCUG 48851 / CIP 106301 / E264).